An 800-amino-acid polypeptide reads, in one-letter code: Ent-copalyl diphosphate synthase 2, chloroplastic (800 aa).

The N-terminal 47 residues, 1-47 (MQMQVLTAASSLPRATLLRPAAAEPWRQSFLQLQARPIQRPGIMLHC), are a transit peptide targeting the chloroplast. The segment at 52-80 (QGQETRERRQLDDDEHARPPQGGDDDVAA) is disordered. The segment covering 55–69 (ETRERRQLDDDEHAR) has biased composition (basic and acidic residues). Lys242 serves as a coordination point for substrate. Residues Asp374 and Asp376 each contribute to the Mg(2+) site. Residues 374–377 (DIDD) carry the DXDD motif motif. Position 461 (Lys461) interacts with substrate.

It belongs to the terpene synthase family. Mg(2+) is required as a cofactor.

It localises to the plastid. Its subcellular location is the chloroplast. The catalysed reaction is (2E,6E,10E)-geranylgeranyl diphosphate = ent-copalyl diphosphate. The protein operates within secondary metabolite biosynthesis; terpenoid biosynthesis. Catalyzes the conversion of geranylgeranyl diphosphate to the phytoalexin precursor ent-copalyl diphosphate. This chain is Ent-copalyl diphosphate synthase 2, chloroplastic, found in Oryza sativa subsp. japonica (Rice).